Consider the following 363-residue polypeptide: Phosphoserine aminotransferase (363 aa).

Residue Arg42 participates in L-glutamate binding. Pyridoxal 5'-phosphate-binding positions include 76–77, Trp101, Thr151, Asp170, and Gln193; that span reads AS. Lys194 is subject to N6-(pyridoxal phosphate)lysine. 234–235 serves as a coordination point for pyridoxal 5'-phosphate; sequence NT.

The protein belongs to the class-V pyridoxal-phosphate-dependent aminotransferase family. SerC subfamily. As to quaternary structure, homodimer. Pyridoxal 5'-phosphate is required as a cofactor.

The protein localises to the cytoplasm. It catalyses the reaction O-phospho-L-serine + 2-oxoglutarate = 3-phosphooxypyruvate + L-glutamate. The catalysed reaction is 4-(phosphooxy)-L-threonine + 2-oxoglutarate = (R)-3-hydroxy-2-oxo-4-phosphooxybutanoate + L-glutamate. It functions in the pathway amino-acid biosynthesis; L-serine biosynthesis; L-serine from 3-phospho-D-glycerate: step 2/3. Catalyzes the reversible conversion of 3-phosphohydroxypyruvate to phosphoserine and of 3-hydroxy-2-oxo-4-phosphonooxybutanoate to phosphohydroxythreonine. The protein is Phosphoserine aminotransferase of Listeria monocytogenes serotype 4b (strain F2365).